A 492-amino-acid polypeptide reads, in one-letter code: Trigger factor (492 aa).

One can recognise a PPIase FKBP-type domain in the interval 169-254 (GDRVSIDYVG…VKEVSKPGEL (86 aa)). The tract at residues 441-492 (LMADDEDAETTTKAKPAKKAAAKKAEAKANEDEAEEPKKKAAPKKKAAKDAE) is disordered. Basic and acidic residues predominate over residues 463–479 (KKAEAKANEDEAEEPKK). Residues 480 to 492 (KAAPKKKAAKDAE) are compositionally biased toward basic residues.

The protein belongs to the FKBP-type PPIase family. Tig subfamily.

It is found in the cytoplasm. It catalyses the reaction [protein]-peptidylproline (omega=180) = [protein]-peptidylproline (omega=0). Functionally, involved in protein export. Acts as a chaperone by maintaining the newly synthesized protein in an open conformation. Functions as a peptidyl-prolyl cis-trans isomerase. The protein is Trigger factor of Mesorhizobium japonicum (strain LMG 29417 / CECT 9101 / MAFF 303099) (Mesorhizobium loti (strain MAFF 303099)).